The chain runs to 274 residues: SIMKMDGSQQEENLDVISTGSLGVDLALGVGGLPRGRVVEIFGPESSGKTTLCLEAIAQCQKNGGICAFIDAEHAFDPIYARKLGVKVEELYLSQPDTGEQALEICDTLVRSGGIDMVVVDSVAALVPKAEIEGEMGDSHVGLQARLMSQALRKLTGHIKRTNTLVVFINQIRMKIGVMFGSPETTTGGNALKFYASVRLDIRRTGQIKKGDDVIGNETKVKVIKNKVAPPFRQAEFDILYGEGISWEGELIDLGVKHDIVEKSGAWYSYNGAK.

43–50 is a binding site for ATP; that stretch reads GPESSGKT.

The protein belongs to the RecA family.

Its subcellular location is the cytoplasm. Functionally, can catalyze the hydrolysis of ATP in the presence of single-stranded DNA, the ATP-dependent uptake of single-stranded DNA by duplex DNA, and the ATP-dependent hybridization of homologous single-stranded DNAs. It interacts with LexA causing its activation and leading to its autocatalytic cleavage. The protein is Protein RecA of Neisseria flavescens.